The following is a 359-amino-acid chain: UDP-3-O-acylglucosamine N-acyltransferase (359 aa).

His-248 acts as the Proton acceptor in catalysis.

Belongs to the transferase hexapeptide repeat family. LpxD subfamily. Homotrimer.

The catalysed reaction is a UDP-3-O-[(3R)-3-hydroxyacyl]-alpha-D-glucosamine + a (3R)-hydroxyacyl-[ACP] = a UDP-2-N,3-O-bis[(3R)-3-hydroxyacyl]-alpha-D-glucosamine + holo-[ACP] + H(+). It functions in the pathway bacterial outer membrane biogenesis; LPS lipid A biosynthesis. In terms of biological role, catalyzes the N-acylation of UDP-3-O-acylglucosamine using 3-hydroxyacyl-ACP as the acyl donor. Is involved in the biosynthesis of lipid A, a phosphorylated glycolipid that anchors the lipopolysaccharide to the outer membrane of the cell. This is UDP-3-O-acylglucosamine N-acyltransferase from Chlamydia abortus (strain DSM 27085 / S26/3) (Chlamydophila abortus).